A 190-amino-acid chain; its full sequence is Imidazoleglycerol-phosphate dehydratase (190 aa).

Belongs to the imidazoleglycerol-phosphate dehydratase family.

The protein resides in the cytoplasm. The catalysed reaction is D-erythro-1-(imidazol-4-yl)glycerol 3-phosphate = 3-(imidazol-4-yl)-2-oxopropyl phosphate + H2O. The protein operates within amino-acid biosynthesis; L-histidine biosynthesis; L-histidine from 5-phospho-alpha-D-ribose 1-diphosphate: step 6/9. The sequence is that of Imidazoleglycerol-phosphate dehydratase from Methanococcus vannielii (strain ATCC 35089 / DSM 1224 / JCM 13029 / OCM 148 / SB).